Reading from the N-terminus, the 1034-residue chain is Glycine dehydrogenase (decarboxylating), mitochondrial (1034 aa).

The N-terminal 63 residues, 1–63, are a transit peptide targeting the mitochondrion; that stretch reads MERARRLAML…LNGFGSQVRT (63 aa). The residue at position 770 (lysine 770) is an N6-(pyridoxal phosphate)lysine.

Belongs to the GcvP family. Homodimer. The glycine cleavage system is composed of four proteins: P, T, L and H. Pyridoxal 5'-phosphate is required as a cofactor.

The protein localises to the mitochondrion. It catalyses the reaction N(6)-[(R)-lipoyl]-L-lysyl-[glycine-cleavage complex H protein] + glycine + H(+) = N(6)-[(R)-S(8)-aminomethyldihydrolipoyl]-L-lysyl-[glycine-cleavage complex H protein] + CO2. Functionally, the glycine cleavage system catalyzes the degradation of glycine. The P protein binds the alpha-amino group of glycine through its pyridoxal phosphate cofactor; CO(2) is released and the remaining methylamine moiety is then transferred to the lipoamide cofactor of the H protein. The protein is Glycine dehydrogenase (decarboxylating), mitochondrial (GDCSP) of Flaveria anomala (Yellowtops).